A 473-amino-acid chain; its full sequence is H(+)/Cl(-) exchange transporter ClcA (473 aa).

Residues Met-1–Pro-32 are Cytoplasmic-facing. The chain crosses the membrane as a helical span at residues Leu-33–Val-69. Residues Gln-70–Ile-76 are Periplasmic-facing. Residues Leu-77–Phe-100 form a helical membrane-spanning segment. The Cytoplasmic segment spans residues Ala-101 to Gly-108. A Selectivity filter part_1 motif is present at residues Gly-106–Pro-110. Ser-107 contacts chloride. Positions Ile-109–Leu-116 form an intramembrane region, helical. The Cytoplasmic portion of the chain corresponds to Glu-117–Arg-123. The chain crosses the membrane as a helical span at residues Trp-124–Ala-141. The Periplasmic portion of the chain corresponds to Gly-142–Arg-147. Positions Gly-146–Pro-150 match the Selectivity filter part_2 motif. The helical transmembrane segment at Glu-148–Phe-166 threads the bilayer. Residues Arg-167 to Thr-176 lie on the Cytoplasmic side of the membrane. Intramembrane regions (helical) lie at residues Leu-177 to Ala-189 and Pro-193 to Ile-201. Over Glu-202–Ser-214 the chain is Cytoplasmic. Residues Ile-215–Phe-232 form a helical membrane-spanning segment. The Periplasmic portion of the chain corresponds to Asn-233–Leu-252. The chain crosses the membrane as a helical span at residues Trp-253–Gln-281. The Cytoplasmic portion of the chain corresponds to Arg-282–Glu-287. Residues Ile-288 to Glu-309 traverse the membrane as a helical segment. Topologically, residues Pro-310 to Ser-329 are periplasmic. The chain crosses the membrane as a helical span at residues Val-330 to Ser-349. Residues Ser-350 to Gly-354 are Cytoplasmic-facing. The short motif at Gly-355–Pro-359 is the Selectivity filter part_3 element. Residues Gly-355 to Ala-376 form a helical membrane-spanning segment. The chloride site is built by Ile-356 and Phe-357. At Ala-377–Ala-386 the chain is on the periplasmic side. The helical intramembrane region spans Gly-387–Ser-401. Positions Val-402–Ala-404 form an intramembrane region, note=Loop between two helices. The helical intramembrane region spans Pro-405–Thr-416. Residues Asp-417–Leu-421 constitute an intramembrane region (note=Loop between two helices). The helical transmembrane segment at Ile-422–Phe-438 threads the bilayer. Topologically, residues Met-439 to Thr-473 are cytoplasmic. Position 445 (Tyr-445) interacts with chloride.

It belongs to the chloride channel (TC 2.A.49) family. ClcA subfamily. In terms of assembly, homodimer.

It localises to the cell inner membrane. The catalysed reaction is 2 chloride(in) + H(+)(out) = 2 chloride(out) + H(+)(in). Proton-coupled chloride transporter. Functions as antiport system and exchanges two chloride ions for 1 proton. Probably acts as an electrical shunt for an outwardly-directed proton pump that is linked to amino acid decarboxylation, as part of the extreme acid resistance (XAR) response. The sequence is that of H(+)/Cl(-) exchange transporter ClcA from Citrobacter koseri (strain ATCC BAA-895 / CDC 4225-83 / SGSC4696).